The following is a 329-amino-acid chain: 4-hydroxythreonine-4-phosphate dehydrogenase (329 aa).

Substrate is bound by residues H136 and T137. Residues H166, H211, and H266 each contribute to the a divalent metal cation site. 3 residues coordinate substrate: K274, N283, and R292.

Belongs to the PdxA family. In terms of assembly, homodimer. It depends on Zn(2+) as a cofactor. Requires Mg(2+) as cofactor. Co(2+) is required as a cofactor.

The protein resides in the cytoplasm. The enzyme catalyses 4-(phosphooxy)-L-threonine + NAD(+) = 3-amino-2-oxopropyl phosphate + CO2 + NADH. It functions in the pathway cofactor biosynthesis; pyridoxine 5'-phosphate biosynthesis; pyridoxine 5'-phosphate from D-erythrose 4-phosphate: step 4/5. Functionally, catalyzes the NAD(P)-dependent oxidation of 4-(phosphooxy)-L-threonine (HTP) into 2-amino-3-oxo-4-(phosphooxy)butyric acid which spontaneously decarboxylates to form 3-amino-2-oxopropyl phosphate (AHAP). The protein is 4-hydroxythreonine-4-phosphate dehydrogenase of Escherichia fergusonii (strain ATCC 35469 / DSM 13698 / CCUG 18766 / IAM 14443 / JCM 21226 / LMG 7866 / NBRC 102419 / NCTC 12128 / CDC 0568-73).